Here is a 215-residue protein sequence, read N- to C-terminus: Interleukin-12 subunit alpha (215 aa).

Residues 1–22 (MCQSRYLLFLATLALLNHLSLA) form the signal peptide. Cystine bridges form between Cys33/Cys106, Cys60/Cys192, and Cys81/Cys119. N-linked (GlcNAc...) asparagine glycosylation is present at Asn89.

This sequence belongs to the IL-6 superfamily. As to quaternary structure, heterodimer with IL12B; disulfide-linked. This heterodimer is known as interleukin IL-12. Heterodimer with EBI3/IL27B; not disulfide-linked. This heterodimer is known as interleukin IL-35. Interacts with NBR1; this interaction promotes IL-12 secretion.

It is found in the secreted. Its function is as follows. Heterodimerizes with IL12B to form the IL-12 cytokine or with EBI3/IL27B to form the IL-35 cytokine. IL-12 is primarily produced by professional antigen-presenting cells (APCs) such as B-cells and dendritic cells (DCs) as well as macrophages and granulocytes and regulates T-cell and natural killer-cell responses, induces the production of interferon-gamma (IFN-gamma), favors the differentiation of T-helper 1 (Th1) cells and is an important link between innate resistance and adaptive immunity. Mechanistically, exerts its biological effects through a receptor composed of IL12R1 and IL12R2 subunits. Binding to the receptor results in the rapid tyrosine phosphorylation of a number of cellular substrates including the JAK family kinases TYK2 and JAK2. In turn, recruited STAT4 gets phosphorylated and translocates to the nucleus where it regulates cytokine/growth factor responsive genes. As part of IL-35, plays essential roles in maintaining the immune homeostasis of the liver microenvironment and also functions as an immune-suppressive cytokine. Mediates biological events through unconventional receptors composed of IL12RB2 and gp130/IL6ST heterodimers or homodimers. Signaling requires the transcription factors STAT1 and STAT4, which form a unique heterodimer that binds to distinct DNA sites. In Mus musculus (Mouse), this protein is Interleukin-12 subunit alpha (Il12a).